The primary structure comprises 185 residues: Large ribosomal subunit protein bL25 (185 aa).

This sequence belongs to the bacterial ribosomal protein bL25 family. CTC subfamily. Part of the 50S ribosomal subunit; part of the 5S rRNA/L5/L18/L25 subcomplex. Contacts the 5S rRNA. Binds to the 5S rRNA independently of L5 and L18.

Its function is as follows. This is one of the proteins that binds to the 5S RNA in the ribosome where it forms part of the central protuberance. The chain is Large ribosomal subunit protein bL25 from Chlamydia trachomatis serovar L2 (strain ATCC VR-902B / DSM 19102 / 434/Bu).